The primary structure comprises 463 residues: Calcitonin gene-related peptide type 1 receptor (463 aa).

Residues 1-22 (MDKKHILCFLVLLPLNMALISA) form the signal peptide. Over 23–138 (ESEEGVNQTD…STHEKVKTAL (116 aa)) the chain is Extracellular. N29, N65, N117, N122, N127, and N128 each carry an N-linked (GlcNAc...) asparagine glycan. Disulfide bonds link C47/C73, C64/C104, and C87/C126. Residues 139-163 (NLFYLTIIGHGLSIASLIISLIIFF) form a helical membrane-spanning segment. Residues 164–174 (YFKSLSCQRIT) lie on the Cytoplasmic side of the membrane. A helical membrane pass occupies residues 175–197 (LHKNLFFSFICNSIVTIIHLTAV). Residues 198–208 (ANNQALVATNP) are Extracellular-facing. Residues 209 to 237 (VSCKVSQFIHLYLMGCNYFWMLCEGVYLH) form a helical membrane-spanning segment. Over 238–251 (TLIVVAVFAEKQHL) the chain is Cytoplasmic. The helical transmembrane segment at 252–272 (MWYYFLGWGFPLLPACIHAIA) threads the bilayer. Residues 273-288 (RSLYYNDNCWISSDTH) are Extracellular-facing. The tract at residues 287 to 288 (TH) is required for RAMP3 interaction. The chain crosses the membrane as a helical span at residues 289 to 313 (LLYIIHGPICAALLVNLFFLLNIVR). The Cytoplasmic portion of the chain corresponds to 314-328 (VLITKLKVTHQVESN). A helical transmembrane segment spans residues 329–350 (LYMKAVRATLILVPLLGIEFVL). At 351-365 (FPWRPEGKVAEEVYD) the chain is on the extracellular side. Residues 366 to 386 (YVMHILMHFQGLLVATIFCFF) form a helical membrane-spanning segment. Residues 387–463 (NGEVQAILRR…KSENMYDLVM (77 aa)) are Cytoplasmic-facing. Phosphoserine occurs at positions 419 and 444.

Belongs to the G-protein coupled receptor 2 family. As to quaternary structure, heterodimer of CALCRL and RAMP1; the receptor complex functions as CGRP receptor. Heterodimer of CALCRL and RAMP2 or CALCRL and RAMP3; the complexes function as adrenomedullin receptor. In terms of tissue distribution, expressed predominantly in the lung, thymus, heart and brain.

The protein localises to the cell membrane. Its function is as follows. G protein-coupled receptor which specificity is determined by its interaction with receptor-activity-modifying proteins (RAMPs). Together with RAMP1, form the receptor complex for calcitonin-gene-related peptides CALCA/CGRP1 and CALCB/CGRP2. Together with RAMP2 or RAMP3, function as receptor complexes for adrenomedullin (ADM and ADM2). Ligand binding causes a conformation change that triggers signaling via guanine nucleotide-binding proteins (G proteins) and modulates the activity of downstream effectors. Activates cAMP-dependent pathway. This chain is Calcitonin gene-related peptide type 1 receptor, found in Mus musculus (Mouse).